A 337-amino-acid polypeptide reads, in one-letter code: UDP-glucose 4-epimerase (337 aa).

Residues 11 to 12 (YI), 31 to 36 (DNLSNA), 58 to 59 (DL), 80 to 84 (FAGLK), asparagine 99, serine 124, tyrosine 149, lysine 153, and phenylalanine 178 contribute to the NAD(+) site. Residues serine 124 and tyrosine 149 each contribute to the substrate site. Tyrosine 149 acts as the Proton acceptor in catalysis. Residues asparagine 179, 199 to 200 (NL), 216 to 218 (GIF), arginine 231, and 292 to 295 (RDGD) each bind substrate.

The protein belongs to the NAD(P)-dependent epimerase/dehydratase family. Homodimer. It depends on NAD(+) as a cofactor.

The catalysed reaction is UDP-alpha-D-glucose = UDP-alpha-D-galactose. The protein operates within carbohydrate metabolism; galactose metabolism. Functionally, involved in the metabolism of galactose. Catalyzes the conversion of UDP-galactose (UDP-Gal) to UDP-glucose (UDP-Glc) through a mechanism involving the transient reduction of NAD. The sequence is that of UDP-glucose 4-epimerase (galE) from Erwinia amylovora (Fire blight bacteria).